The primary structure comprises 1040 residues: Multidrug resistance protein MdtB (1040 aa).

A run of 12 helical transmembrane segments spans residues F16–I36, L347–A367, I369–L389, L396–I416, I440–F460, F472–P492, W537–I557, L863–I883, F888–A908, I911–V931, I968–V988, and I998–I1018.

The protein belongs to the resistance-nodulation-cell division (RND) (TC 2.A.6) family. MdtB subfamily. Part of a tripartite efflux system composed of MdtA, MdtB and MdtC. MdtB forms a heteromultimer with MdtC.

It localises to the cell inner membrane. The MdtABC tripartite complex confers resistance against novobiocin and deoxycholate. This is Multidrug resistance protein MdtB from Escherichia coli (strain SE11).